Reading from the N-terminus, the 183-residue chain is Protein CT_584 (183 aa).

It belongs to the chlamydial CPn_0803/CT_584/TC_0873 family.

This is Protein CT_584 from Chlamydia trachomatis serovar D (strain ATCC VR-885 / DSM 19411 / UW-3/Cx).